Consider the following 59-residue polypeptide: Salivary thrombin inhibitor XC-43 (59 aa).

The N-terminal stretch at 1-23 (MNLQFLFIFIAFCVMLFAQIVTA) is a signal peptide.

Interacts with human F2 (thrombin). As to expression, salivary gland (at protein level).

The protein resides in the secreted. Functionally, anticoagulant protein that acts as a competitive inhibitor of host thrombin. Inhibits thrombin-mediated host platelet aggregation. This Xenopsylla cheopis (Oriental rat flea) protein is Salivary thrombin inhibitor XC-43.